The sequence spans 261 residues: Early 31 kDa protein (261 aa).

The tract at residues 230–261 is disordered; the sequence is INKYSADTDEEEEEEEDNAEDTEEEEEEEADQ. Over residues 236 to 261 the composition is skewed to acidic residues; that stretch reads DTDEEEEEEEDNAEDTEEEEEEEADQ.

This chain is Early 31 kDa protein, found in Frog virus 3 (isolate Goorha) (FV-3).